The sequence spans 385 residues: Selenoprotein P (385 aa).

An N-terminal signal peptide occupies residues 1-19 (MWRSLGLALALCLLPYGGA). U59 is a non-standard amino acid (selenocysteine). The cysteinyl-selenocysteine (Sec-Cys); in isoform Se-P1 cross-link spans 59-62 (UYLC). N-linked (GlcNAc...) asparagine glycans are attached at residues N83, N174, and N188. 2 cysteine pairs are disulfide-bonded: C168–C186 and C172–C175. Positions 196 to 262 (KTTEPSEEHN…KGQHRQGHLE (67 aa)) are disordered. Basic residues predominate over residues 243 to 258 (LHHHHHHHKHKGQHRQ). Residue U264 is a non-standard amino acid, selenocysteine. S269 is subject to Phosphoserine. Residues U282, U323, U335, and U357 are each a non-standard amino acid (selenocysteine). Residues 357–385 (UHSQHVSPTEASPNUSUNNKTKKUKUNLN) form a disordered region. Positions 360–369 (QHVSPTEASP) are enriched in polar residues. A glycan (O-linked (Hex...) threonine; partial) is linked at T365. Residues U371, U373, U380, and U382 are each a non-standard amino acid (selenocysteine). Basic residues predominate over residues 376 to 385 (KTKKUKUNLN).

This sequence belongs to the selenoprotein P family. Isoform Se-P1 contains several disulfide bridges and a selenide-sulfide bond between Sec-59 and Cys-62. These bonds are speculated to serve as redox-active pairs. In terms of processing, phosphorylation sites are present in the extracellular medium. Widely expressed, mainly by the liver. Secreted in plasma.

The protein resides in the secreted. Functionally, might be responsible for some of the extracellular antioxidant defense properties of selenium or might be involved in the transport of selenium. May supply selenium to tissues such as brain and testis. The chain is Selenoprotein P from Rattus norvegicus (Rat).